A 626-amino-acid chain; its full sequence is Carnitine O-acetyltransferase (626 aa).

Residue K93 is modified to N6-succinyllysine. An N6-acetyllysine; alternate modification is found at K261. K261 carries the N6-succinyllysine; alternate modification. An N6-acetyllysine modification is found at K268. Residue H343 is the Proton acceptor of the active site. Residues K419 and 423–430 each bind CoA; that span reads KSEKLSPD. Residues Y452 and S454 each coordinate (R)-carnitine. A CoA-binding site is contributed by S456. T465 is a binding site for (R)-carnitine. 2 residues coordinate CoA: R504 and Q555. The short motif at 624–626 is the Microbody targeting signal element; that stretch reads AKL.

This sequence belongs to the carnitine/choline acetyltransferase family. In terms of assembly, monomer.

It is found in the endoplasmic reticulum. It localises to the peroxisome. The protein localises to the mitochondrion inner membrane. It carries out the reaction (R)-carnitine + acetyl-CoA = O-acetyl-(R)-carnitine + CoA. It catalyses the reaction propanoyl-CoA + (R)-carnitine = O-propanoyl-(R)-carnitine + CoA. The enzyme catalyses butanoyl-CoA + (R)-carnitine = O-butanoyl-(R)-carnitine + CoA. The catalysed reaction is hexanoyl-CoA + (R)-carnitine = O-hexanoyl-(R)-carnitine + CoA. It carries out the reaction octanoyl-CoA + (R)-carnitine = O-octanoyl-(R)-carnitine + CoA. It catalyses the reaction decanoyl-CoA + (R)-carnitine = O-decanoyl-(R)-carnitine + CoA. The enzyme catalyses 3-methylbutanoyl-CoA + (R)-carnitine = O-3-methylbutanoyl-(R)-carnitine + CoA. The catalysed reaction is 2-methylpropanoyl-CoA + (R)-carnitine = O-isobutanoyl-(R)-carnitine + CoA. It carries out the reaction 2-methylbutanoyl-CoA + (R)-carnitine = O-2-methylbutanoyl-(R)-carnitine + CoA. It catalyses the reaction acetoacetyl-CoA + (R)-carnitine = O-3-oxobutanoyl-(R)-carnitine + CoA. The enzyme catalyses 3-hydroxybutanoyl-CoA + (R)-carnitine = O-3-hydroxybutanoyl-(R)-carnitine + CoA. The catalysed reaction is 4,8-dimethylnonanoyl-CoA + (R)-carnitine = O-4,8-dimethylnonanoyl-(R)-carnitine + CoA. It carries out the reaction 2,6-dimethylheptanoyl-CoA + (R)-carnitine = O-2,6-dimethylheptanoyl-(R)-carnitine + CoA. Catalyzes the reversible transfer of acyl groups from carnitine to coenzyme A (CoA) and regulates the acyl-CoA/CoA ratio. Also plays a crucial role in the transport of fatty acids for beta-oxidation. Responsible for the synthesis of short- and branched-chain acylcarnitines. Active towards some branched-chain amino acid oxidation pathway (BCAAO) intermediates. Trans-2-enoyl-CoAs and 2-methylacyl-CoAs are poor substrates. In Mus musculus (Mouse), this protein is Carnitine O-acetyltransferase.